A 63-amino-acid chain; its full sequence is Large ribosomal subunit protein bL35 (63 aa).

Basic residues predominate over residues 1–15 (MPKIKTHRGAAKRFK). Residues 1–26 (MPKIKTHRGAAKRFKQTAGGKWKGSH) are disordered.

It belongs to the bacterial ribosomal protein bL35 family.

The sequence is that of Large ribosomal subunit protein bL35 from Pelotomaculum thermopropionicum (strain DSM 13744 / JCM 10971 / SI).